Here is a 347-residue protein sequence, read N- to C-terminus: S-adenosylmethionine:tRNA ribosyltransferase-isomerase (347 aa).

This sequence belongs to the QueA family. Monomer.

The protein localises to the cytoplasm. It catalyses the reaction 7-aminomethyl-7-carbaguanosine(34) in tRNA + S-adenosyl-L-methionine = epoxyqueuosine(34) in tRNA + adenine + L-methionine + 2 H(+). The protein operates within tRNA modification; tRNA-queuosine biosynthesis. Transfers and isomerizes the ribose moiety from AdoMet to the 7-aminomethyl group of 7-deazaguanine (preQ1-tRNA) to give epoxyqueuosine (oQ-tRNA). The polypeptide is S-adenosylmethionine:tRNA ribosyltransferase-isomerase (Pseudomonas aeruginosa (strain ATCC 15692 / DSM 22644 / CIP 104116 / JCM 14847 / LMG 12228 / 1C / PRS 101 / PAO1)).